The primary structure comprises 649 residues: Archaeal Lon protease (649 aa).

Topologically, residues Met-1–Thr-114 are cytoplasmic. ATP is bound at residue Gly-47–Ser-54. A helical transmembrane segment spans residues Thr-115–Pro-135. Topologically, residues Gln-136–Tyr-138 are extracellular. Residues Leu-139 to Leu-159 form a helical membrane-spanning segment. Residues Thr-160–Asn-649 lie on the Cytoplasmic side of the membrane. Residues Glu-456–Leu-639 form the Lon proteolytic domain. Active-site residues include Ser-550 and Lys-593.

It belongs to the peptidase S16 family. Archaeal LonB subfamily. Homohexamer. Organized in a ring with a central cavity.

The protein localises to the cell membrane. ATP-dependent serine protease that mediates the selective degradation of mutant and abnormal proteins as well as certain short-lived regulatory proteins. Degrades polypeptides processively. The sequence is that of Archaeal Lon protease from Methanocaldococcus jannaschii (strain ATCC 43067 / DSM 2661 / JAL-1 / JCM 10045 / NBRC 100440) (Methanococcus jannaschii).